The following is a 428-amino-acid chain: Trigger factor (428 aa).

Residues 163 to 248 (KDIVTIDFEG…VKEIKAKELP (86 aa)) enclose the PPIase FKBP-type domain.

It belongs to the FKBP-type PPIase family. Tig subfamily.

Its subcellular location is the cytoplasm. The enzyme catalyses [protein]-peptidylproline (omega=180) = [protein]-peptidylproline (omega=0). Its function is as follows. Involved in protein export. Acts as a chaperone by maintaining the newly synthesized protein in an open conformation. Functions as a peptidyl-prolyl cis-trans isomerase. The sequence is that of Trigger factor from Lachnoclostridium phytofermentans (strain ATCC 700394 / DSM 18823 / ISDg) (Clostridium phytofermentans).